Reading from the N-terminus, the 449-residue chain is Probable glycine dehydrogenase (decarboxylating) subunit 1 (449 aa).

The protein belongs to the GcvP family. N-terminal subunit subfamily. In terms of assembly, the glycine cleavage system is composed of four proteins: P, T, L and H. In this organism, the P 'protein' is a heterodimer of two subunits.

It carries out the reaction N(6)-[(R)-lipoyl]-L-lysyl-[glycine-cleavage complex H protein] + glycine + H(+) = N(6)-[(R)-S(8)-aminomethyldihydrolipoyl]-L-lysyl-[glycine-cleavage complex H protein] + CO2. Its function is as follows. The glycine cleavage system catalyzes the degradation of glycine. The P protein binds the alpha-amino group of glycine through its pyridoxal phosphate cofactor; CO(2) is released and the remaining methylamine moiety is then transferred to the lipoamide cofactor of the H protein. This Sulfurisphaera tokodaii (strain DSM 16993 / JCM 10545 / NBRC 100140 / 7) (Sulfolobus tokodaii) protein is Probable glycine dehydrogenase (decarboxylating) subunit 1.